Here is a 354-residue protein sequence, read N- to C-terminus: Protein Wnt-11 (354 aa).

The N-terminal stretch at 1-23 (MTEYRNFLLLFITSLSVIYPCTG) is a signal peptide. Asparagine 32, asparagine 39, and asparagine 89 each carry an N-linked (GlcNAc...) asparagine glycan. 9 disulfide bridges follow: cysteine 129–cysteine 137, cysteine 139–cysteine 156, cysteine 209–cysteine 223, cysteine 211–cysteine 218, cysteine 283–cysteine 314, cysteine 299–cysteine 309, cysteine 329–cysteine 344, cysteine 331–cysteine 341, and cysteine 336–cysteine 337. A lipid anchor (O-palmitoleoyl serine; by PORCN) is attached at serine 215. N-linked (GlcNAc...) asparagine glycosylation occurs at asparagine 300.

This sequence belongs to the Wnt family. Palmitoleoylation is required for efficient binding to frizzled receptors. Depalmitoleoylation leads to Wnt signaling pathway inhibition.

The protein localises to the secreted. The protein resides in the extracellular space. It localises to the extracellular matrix. Ligand for fzd5, a member of the G-protein coupled frizzled receptor family. Plays a role in early eye development, possibly through wnt non-canonical signaling. Promotes eye formation, at least partially, by antagonizing the Wnt/beta-catenin pathway. In addition, promotes coherence of eye field cells, potentially contributing to the coordinated morphogenetic behaviors of cells in the nascent eye field. The chain is Protein Wnt-11 (wnt11) from Danio rerio (Zebrafish).